Consider the following 433-residue polypeptide: Serine hydroxymethyltransferase (433 aa).

(6S)-5,6,7,8-tetrahydrofolate is bound by residues L132 and G136–L138. Residue K241 is modified to N6-(pyridoxal phosphate)lysine.

Belongs to the SHMT family. As to quaternary structure, homodimer. Requires pyridoxal 5'-phosphate as cofactor.

It localises to the cytoplasm. The enzyme catalyses (6R)-5,10-methylene-5,6,7,8-tetrahydrofolate + glycine + H2O = (6S)-5,6,7,8-tetrahydrofolate + L-serine. It functions in the pathway one-carbon metabolism; tetrahydrofolate interconversion. The protein operates within amino-acid biosynthesis; glycine biosynthesis; glycine from L-serine: step 1/1. Functionally, catalyzes the reversible interconversion of serine and glycine with tetrahydrofolate (THF) serving as the one-carbon carrier. This reaction serves as the major source of one-carbon groups required for the biosynthesis of purines, thymidylate, methionine, and other important biomolecules. Also exhibits THF-independent aldolase activity toward beta-hydroxyamino acids, producing glycine and aldehydes, via a retro-aldol mechanism. This Afipia carboxidovorans (strain ATCC 49405 / DSM 1227 / KCTC 32145 / OM5) (Oligotropha carboxidovorans) protein is Serine hydroxymethyltransferase.